A 337-amino-acid polypeptide reads, in one-letter code: Hsp90 co-chaperone Cdc37-like 1 (337 aa).

Residues 1–11 (MEQPWPPPGPW) show a composition bias toward pro residues. A disordered region spans residues 1–40 (MEQPWPPPGPWSLPRAEGEAEEESDFDVFPSSPRCPQLPG). The tract at residues 2–171 (EQPWPPPGPW…YEQKIRHFGM (170 aa)) is self-association. 2 positions are modified to phosphoserine: Ser32 and Ser88. Residues 84–122 (HNSESLDQEHAKAQTAVSELRQREEEWRQKEEALVQREK) are a coiled coil. The interval 147 to 277 (KDTEDEDKSE…SRVRLYSQSQ (131 aa)) is self-association and interaction with Hsp90. The tract at residues 267–337 (KSRVRLYSQS…DDEPKMMDTV (71 aa)) is interaction with Hsp70. The interval 278–337 (SFQPMTVQNHVPHSGVGSIGLLESLPQNPDYLQYSISTALCSLNSVVHKEDDEPKMMDTV) is required for interaction with STIP1.

It belongs to the CDC37 family. Self-associates. Forms complexes with Hsp70 and Hsp90. Interacts with CDC37, FKBP4, PPID and STIP1. As to expression, expressed in brain, heart, kidney, liver, placenta and skeletal muscle.

Its subcellular location is the cytoplasm. Its function is as follows. Co-chaperone that binds to numerous proteins and promotes their interaction with Hsp70 and Hsp90. The polypeptide is Hsp90 co-chaperone Cdc37-like 1 (CDC37L1) (Homo sapiens (Human)).